A 1056-amino-acid chain; its full sequence is ISWI chromatin-remodeling complex ATPase CHR11 (1056 aa).

The span at 1 to 10 shows a compositional bias: low complexity; that stretch reads MARNSNSDEA. 2 disordered regions span residues 1–80 and 133–175; these read MARN…SKRE and KSDG…GSGN. 2 stretches are compositionally biased toward acidic residues: residues 11-32 and 60-73; these read FSSE…EELE and PVED…DEEK. Residues 12 to 105 adopt a coiled-coil conformation; that stretch reads SSEEEEERVK…QEMLESQNAS (94 aa). Over residues 141–151 the composition is skewed to basic residues; sequence KKAKGRGRHAS. Residues 155 to 169 are compositionally biased toward acidic residues; it reads EEEEDEEYLKEEEDG. The Helicase ATP-binding domain maps to 201–366; that stretch reads IRLYENGING…WALLNFLLPE (166 aa). 214–221 contributes to the ATP binding site; it reads DEMGLGKT. Residues 317-320 carry the DEAH box motif; that stretch reads DEAH. In terms of domain architecture, Helicase C-terminal spans 494-645; sequence LLDKLLPKLK…ALVIQQGRLA (152 aa). Disordered stretches follow at residues 738–774 and 814–833; these read WNDP…PRIP and IDVE…EVEE. The span at 815-833 shows a compositional bias: acidic residues; sequence DVEEPEEGGDPLTTEEVEE. SANT domains are found at residues 840 to 892 and 941 to 1002; these read EGFS…ERYK and QNKG…DTLI. Residues 1011–1056 form a disordered region; it reads EFDERERQARKEKKLAKSATPSKRPLGRQASESPSSTKKRKHLSMR. Residues 1047–1056 show a composition bias toward basic residues; that stretch reads TKKRKHLSMR.

It belongs to the SNF2/RAD54 helicase family. ISWI subfamily. Interacts with RLT1 and RLT2. Interacts (via C-terminus) with RLT1 (via the DDT domain), RLT2 (via the DDT domain), PTM (via the DDT domain) and DDR4 (via the DDT domain). Binds to FGT1. In terms of tissue distribution, highly expressed in growing tissues such as inflorescence and flower meristems, young leaves and floral organs. Expressed in roots, rosette and cauline leaves, stems, flowers, inflorescences and siliques.

The protein localises to the nucleus. In terms of biological role, possesses intrinsic ATP-dependent nucleosome-remodeling activity. Constitutes the catalytic subunit of several complexes capable of forming ordered nucleosome arrays on chromatin. Involved in the formation of nucleosome distribution patterns. Involved in nuclear proliferation during megagametogenesis and cell expansion in the sporophyte. Required for the maintenance of the plant vegetative phase. In association with RLT1 or RLT2 may prevent the early activation of the vegetative-to-reproductive transition by regulating key genes that contribute to flower timing, such as FT, SEP1, SEP3, AGL8/FUL, SOC1 and FLC. Necessary to acquire heat stress (HS) memory. In Arabidopsis thaliana (Mouse-ear cress), this protein is ISWI chromatin-remodeling complex ATPase CHR11.